The primary structure comprises 121 residues: MAELNVEIVAVDRKIWSGAGTFLFTRTTVGEIGILPNHIPLVAQLVDDAMVRVERDGDKDLRIAVDGGFMSVTDAGVSILAESAEFESEIDEAVARQDSESDDPRTAARGRARLRAVGAID.

Belongs to the ATPase epsilon chain family. As to quaternary structure, F-type ATPases have 2 components, CF(1) - the catalytic core - and CF(0) - the membrane proton channel. CF(1) has five subunits: alpha(3), beta(3), gamma(1), delta(1), epsilon(1). CF(0) has three main subunits: a, b and c.

The protein resides in the cell membrane. In terms of biological role, produces ATP from ADP in the presence of a proton gradient across the membrane. This Mycobacterium marinum (strain ATCC BAA-535 / M) protein is ATP synthase epsilon chain.